Consider the following 154-residue polypeptide: MNDAATVLGTADLQEILRLLPHRYPFLLVDRIIEIDDDNSAIGIKNVTANEPHFTGHFPEKPIMPGVLLIEGMAQTAGAICARKTGIGSNLVYFMTIDNARFRKPVVPGDRVEFHVTKQKQRGNIWKFHCDAKVDGQLVAEADIGAMIVSKEDA.

Histidine 57 is an active-site residue.

This sequence belongs to the thioester dehydratase family. FabZ subfamily.

Its subcellular location is the cytoplasm. The catalysed reaction is a (3R)-hydroxyacyl-[ACP] = a (2E)-enoyl-[ACP] + H2O. In terms of biological role, involved in unsaturated fatty acids biosynthesis. Catalyzes the dehydration of short chain beta-hydroxyacyl-ACPs and long chain saturated and unsaturated beta-hydroxyacyl-ACPs. The protein is 3-hydroxyacyl-[acyl-carrier-protein] dehydratase FabZ of Sinorhizobium fredii (strain NBRC 101917 / NGR234).